Consider the following 275-residue polypeptide: 2,3,4,5-tetrahydropyridine-2,6-dicarboxylate N-succinyltransferase (275 aa).

Substrate contacts are provided by R108 and D145.

This sequence belongs to the transferase hexapeptide repeat family. In terms of assembly, homotrimer.

Its subcellular location is the cytoplasm. The enzyme catalyses (S)-2,3,4,5-tetrahydrodipicolinate + succinyl-CoA + H2O = (S)-2-succinylamino-6-oxoheptanedioate + CoA. It participates in amino-acid biosynthesis; L-lysine biosynthesis via DAP pathway; LL-2,6-diaminopimelate from (S)-tetrahydrodipicolinate (succinylase route): step 1/3. This is 2,3,4,5-tetrahydropyridine-2,6-dicarboxylate N-succinyltransferase from Roseobacter denitrificans (strain ATCC 33942 / OCh 114) (Erythrobacter sp. (strain OCh 114)).